The primary structure comprises 532 residues: Phosphoenolpyruvate carboxykinase (ATP) (532 aa).

Substrate contacts are provided by R60, Y194, and K200. ATP contacts are provided by residues K200, H219, and 237–245 (GLSGTGKTT). K200 and H219 together coordinate Mn(2+). Residue D258 coordinates Mn(2+). Residues E286, R324, and T449 each coordinate ATP. R324 contacts substrate.

Belongs to the phosphoenolpyruvate carboxykinase (ATP) family. The cofactor is Mn(2+).

Its subcellular location is the cytoplasm. The catalysed reaction is oxaloacetate + ATP = phosphoenolpyruvate + ADP + CO2. The protein operates within carbohydrate biosynthesis; gluconeogenesis. Functionally, involved in the gluconeogenesis. Catalyzes the conversion of oxaloacetate (OAA) to phosphoenolpyruvate (PEP) through direct phosphoryl transfer between the nucleoside triphosphate and OAA. This is Phosphoenolpyruvate carboxykinase (ATP) from Cereibacter sphaeroides (strain ATCC 17025 / ATH 2.4.3) (Rhodobacter sphaeroides).